The chain runs to 168 residues: Dihydrofolate reductase (168 aa).

The DHFR domain maps to Met1–Lys159. Ile5 to Ala7 provides a ligand contact to substrate. NADP(+) contacts are provided by residues Phe6–Ala7 and Ile14–Asp19. Asp27 lines the substrate pocket. Residue Gly43–Thr46 participates in NADP(+) binding. Arg57 serves as a coordination point for substrate. Residues Val62–Ala65 and Ile95–Leu100 contribute to the NADP(+) site. Thr114 is a binding site for substrate.

It belongs to the dihydrofolate reductase family.

The enzyme catalyses (6S)-5,6,7,8-tetrahydrofolate + NADP(+) = 7,8-dihydrofolate + NADPH + H(+). Its pathway is cofactor biosynthesis; tetrahydrofolate biosynthesis; 5,6,7,8-tetrahydrofolate from 7,8-dihydrofolate: step 1/1. Key enzyme in folate metabolism. Catalyzes an essential reaction for de novo glycine and purine synthesis, and for DNA precursor synthesis. The chain is Dihydrofolate reductase (dfrA) from Bacillus subtilis (strain 168).